We begin with the raw amino-acid sequence, 449 residues long: Pentalenene oxygenase (449 aa).

Residues 251–273 traverse the membrane as a helical segment; sequence VITVMAAGTETVAGTLTWIFHLL. Residue Cys393 coordinates heme.

The protein belongs to the cytochrome P450 family.

The protein localises to the membrane. It carries out the reaction pentalenene + 4 reduced [2Fe-2S]-[ferredoxin] + 2 O2 + 4 H(+) = pentalen-13-al + 4 oxidized [2Fe-2S]-[ferredoxin] + 3 H2O. It participates in antibiotic biosynthesis; neopentalenolactone biosynthesis. Catalyzes the conversion of pentalenene to pentalen-13-al by stepwise oxidation via pentalen-13-ol, a precursor of neopentalenolactone antibiotic. This chain is Pentalenene oxygenase (ptlI), found in Streptomyces avermitilis (strain ATCC 31267 / DSM 46492 / JCM 5070 / NBRC 14893 / NCIMB 12804 / NRRL 8165 / MA-4680).